Here is a 107-residue protein sequence, read N- to C-terminus: Small ribosomal subunit protein bS18c (107 aa).

Over residues 85 to 95 (KKAQRFKRRQS) the composition is skewed to basic residues. The tract at residues 85-107 (KKAQRFKRRQSTARTVGLRTRNK) is disordered.

Belongs to the bacterial ribosomal protein bS18 family. As to quaternary structure, part of the 30S ribosomal subunit.

The protein localises to the plastid. The protein resides in the chloroplast. This Oenothera argillicola (Appalachian evening primrose) protein is Small ribosomal subunit protein bS18c.